The chain runs to 323 residues: Elongation factor P--(R)-beta-lysine ligase (323 aa).

74–76 (SPE) is a binding site for substrate. ATP contacts are provided by residues 98–100 (RNE) and N107. Y116 contacts substrate. 242–243 (EL) serves as a coordination point for ATP. E249 is a binding site for substrate. Position 298 (G298) interacts with ATP.

This sequence belongs to the class-II aminoacyl-tRNA synthetase family. EpmA subfamily. Homodimer.

The catalysed reaction is D-beta-lysine + L-lysyl-[protein] + ATP = N(6)-((3R)-3,6-diaminohexanoyl)-L-lysyl-[protein] + AMP + diphosphate + H(+). Functionally, with EpmB is involved in the beta-lysylation step of the post-translational modification of translation elongation factor P (EF-P). Catalyzes the ATP-dependent activation of (R)-beta-lysine produced by EpmB, forming a lysyl-adenylate, from which the beta-lysyl moiety is then transferred to the epsilon-amino group of a conserved specific lysine residue in EF-P. In Vibrio parahaemolyticus serotype O3:K6 (strain RIMD 2210633), this protein is Elongation factor P--(R)-beta-lysine ligase.